Consider the following 410-residue polypeptide: 2-oxoglutarate-dependent dioxygenase AOP3 (410 aa).

In terms of domain architecture, Fe2OG dioxygenase spans 258-355 (GNASVGAKEA…RYAAALFSYP (98 aa)). Fe cation is bound by residues H278, D280, and H335. 2-oxoglutarate is bound at residue R346.

This sequence belongs to the iron/ascorbate-dependent oxidoreductase family. Fe(2+) is required as a cofactor.

Functionally, 2-oxoglutarate-dependent dioxygenase involved in glucosinolates biosynthesis. Catalyzes the conversion of methylsulfinylalkyl glucosinolates to hydroxyalkyl glucosinolates. This is 2-oxoglutarate-dependent dioxygenase AOP3 (AOP3) from Arabidopsis thaliana (Mouse-ear cress).